We begin with the raw amino-acid sequence, 402 residues long: Caspase-1 (402 aa).

Positions 1-91 constitute a CARD domain; sequence MADKVLRAKR…YLAEILELQS (91 aa). A propeptide spanning residues 1 to 118 is cleaved from the precursor; the sequence is MADKVLRAKR…PFSSETKEKL (118 aa). Catalysis depends on residues histidine 236 and cysteine 284. Residues 297–314 constitute a propeptide that is removed on maturation; sequence SVGNSEEGFLTDAIFEDD. Serine 301 carries the post-translational modification Phosphoserine.

The protein belongs to the peptidase C14A family. Heterotetramer that consists of two anti-parallel arranged heterodimers, each one formed by a 20 kDa (Caspase-1 subunit p20) and a 10 kDa (Caspase-1 subunit p10) subunit. May be a component of the inflammasome, a protein complex which also includes PYCARD, CARD8 and NLRP2 and whose function would be the activation of pro-inflammatory caspases. Component of the AIM2 PANoptosome complex, a multiprotein complex that drives inflammatory cell death (PANoptosis). Both the p10 and p20 subunits interact with MEFV. Interacts with CARD17P/INCA and CARD18. Interacts with SERPINB1; this interaction regulates CASP1 activity. In terms of assembly, heterotetramer that consists of two anti-parallel arranged heterodimers, each one formed by a 20 kDa (Caspase-1 subunit p20) and a 10 kDa (Caspase-1 subunit p10) subunit. The two subunits are derived from the precursor sequence by an autocatalytic mechanism. In terms of processing, ubiquitinated via 'Lys-11'-linked polyubiquitination. Deubiquitinated by USP8.

The protein localises to the cytoplasm. The protein resides in the cell membrane. The enzyme catalyses Strict requirement for an Asp residue at position P1 and has a preferred cleavage sequence of Tyr-Val-Ala-Asp-|-.. Thiol protease involved in a variety of inflammatory processes by proteolytically cleaving other proteins, such as the precursors of the inflammatory cytokines interleukin-1 beta (IL1B) and interleukin 18 (IL18) as well as the pyroptosis inducer Gasdermin-D (GSDMD), into active mature peptides. Plays a key role in cell immunity as an inflammatory response initiator: once activated through formation of an inflammasome complex, it initiates a pro-inflammatory response through the cleavage of the two inflammatory cytokines IL1B and IL18, releasing the mature cytokines which are involved in a variety of inflammatory processes. Cleaves a tetrapeptide after an Asp residue at position P1. Also initiates pyroptosis, a programmed lytic cell death pathway, through cleavage of GSDMD. In contrast to cleavage of interleukin IL1B, recognition and cleavage of GSDMD is not strictly dependent on the consensus cleavage site but depends on an exosite interface on CASP1 that recognizes and binds the Gasdermin-D, C-terminal (GSDMD-CT) part. Cleaves and activates CASP7 in response to bacterial infection, promoting plasma membrane repair. Upon inflammasome activation, during DNA virus infection but not RNA virus challenge, controls antiviral immunity through the cleavage of CGAS, rendering it inactive. In apoptotic cells, cleaves SPHK2 which is released from cells and remains enzymatically active extracellularly. This chain is Caspase-1 (Casp1), found in Rattus norvegicus (Rat).